We begin with the raw amino-acid sequence, 180 residues long: Shikimate kinase (180 aa).

An ATP-binding site is contributed by 14–19 (GAGKTC). Thr18 contacts Mg(2+). Substrate-binding residues include Asp36, Arg60, and Gly82. Position 120 (Arg120) interacts with ATP. Arg139 is a substrate binding site.

The protein belongs to the shikimate kinase family. In terms of assembly, monomer. Mg(2+) serves as cofactor.

The protein localises to the cytoplasm. It carries out the reaction shikimate + ATP = 3-phosphoshikimate + ADP + H(+). The protein operates within metabolic intermediate biosynthesis; chorismate biosynthesis; chorismate from D-erythrose 4-phosphate and phosphoenolpyruvate: step 5/7. Its function is as follows. Catalyzes the specific phosphorylation of the 3-hydroxyl group of shikimic acid using ATP as a cosubstrate. The sequence is that of Shikimate kinase from Stenotrophomonas maltophilia (strain R551-3).